The sequence spans 190 residues: MGFLSSLSNLFGMGKKDVNIVVVGLDNSGKTTILNQLKTPETRSQQIVPTVGHVVTNFSTQNLSFHAFDMAGQMKYRSTWESYFHSSQGVIFVLDSSDRVRMELLKDELWLVLDHKDVASRGIPVVILANKMDIPGAMTCADITAALGLNLHRSGTWSIHSTCALTGDGLDKAMQQLSSEIQKYLETRKS.

The N-myristoyl glycine moiety is linked to residue Gly2. GTP-binding positions include 24 to 31 (GLDNSGKT), Thr50, 69 to 73 (DMAGQ), Gly72, 130 to 133 (NKMD), and Ala164. Mg(2+) is bound by residues Thr31 and Thr50.

The protein belongs to the small GTPase superfamily. Arf family.

Its subcellular location is the cytoplasm. The polypeptide is ADP-ribosylation factor-like protein 6 (Caenorhabditis briggsae).